Here is a 250-residue protein sequence, read N- to C-terminus: MSAELNVPMDPSAPACPEPGHKGMDYRDWVRRSYLELVTSNHHSVQALSWRKLYLSRAKLKASSRTSALLSGFAMVAMVEVQLETKYQYPQPLLIAFSACTTVLVAVHLFALLISTCILPNVEAVSNIHNLNSISESPHERMHPYIELAWGFSTVLGILLFLAEVVLLCWIKFLPVDAKDQPGSHSHTGWQAALVSTIIMVPVGLIFVVFTIHFYRSLVRHKTERHNREIEELHKLKVQLDGHERSLQVV.

The next 4 helical transmembrane spans lie at 66–83, 94–114, 148–168, and 192–212; these read TSAL…EVQL, LIAF…ALLI, LAWG…VVLL, and AALV…VFTI.

The protein belongs to the Orai family. In terms of assembly, oligomerizes in homomeric and heteromeric ORAI complexes. Native CRAC channels most likely consist of hexameric ORAI heteromers, implying that diverse ORAI1, ORAI2 and ORAI3 subunit combinations with distinct biophysical properties can operate in a cell-type specific way. Interacts with STIM1; this regulates channel activity. Interacts with CRACR2A/EFCAB4B.

Its subcellular location is the cell membrane. It carries out the reaction Ca(2+)(in) = Ca(2+)(out). Its activity is regulated as follows. CRAC channels are regulated by fast Ca(2+)-dependent inactivation (FCDI), a mechanism that limits Ca(2+) influx and cell toxicity. ORAI2 channels display prominent FCDI. Inhibited by lanthanides such as Gd(3+) ions. Pore-forming subunit of inward rectifying Ca(2+) release-activated Ca(2+) (CRAC) channels. Assembles with ORAI1 and ORAI3 to form hexameric CRAC channels that mediate Ca(2+) influx upon depletion of endoplasmic reticulum Ca(2+) store and channel activation by Ca(2+) sensor STIM1, a process known as store-operated Ca(2+) entry (SOCE). Various pore subunit combinations may account for distinct CRAC channel spatiotemporal and cell-type specific dynamics. ORAI1 mainly contributes to the generation of Ca(2+) plateaus involved in sustained Ca(2+) entry and is dispensable for cytosolic Ca(2+) oscillations, whereas ORAI2 and ORAI3 generate oscillatory patterns. CRAC channels assemble in Ca(2+) signaling microdomains where Ca(2+) influx is coupled to calmodulin and calcineurin signaling and activation of NFAT transcription factors recruited to ORAI1 via AKAP5. CRAC channels are the main pathway for Ca(2+) influx in T cells and promote the immune response to pathogens by activating NFAT-dependent cytokine and chemokine transcription. The polypeptide is Protein orai-2 (Orai2) (Mus musculus (Mouse)).